The following is a 339-amino-acid chain: D-erythrose-4-phosphate dehydrogenase (339 aa).

12–13 (RI) is an NAD(+) binding site. Residues 154-156 (SCT), R200, 213-214 (TK), and R236 contribute to the substrate site. The active-site Nucleophile is C155. Residue N318 coordinates NAD(+).

It belongs to the glyceraldehyde-3-phosphate dehydrogenase family. Epd subfamily. As to quaternary structure, homotetramer.

The protein localises to the cytoplasm. It carries out the reaction D-erythrose 4-phosphate + NAD(+) + H2O = 4-phospho-D-erythronate + NADH + 2 H(+). The protein operates within cofactor biosynthesis; pyridoxine 5'-phosphate biosynthesis; pyridoxine 5'-phosphate from D-erythrose 4-phosphate: step 1/5. Its function is as follows. Catalyzes the NAD-dependent conversion of D-erythrose 4-phosphate to 4-phosphoerythronate. The polypeptide is D-erythrose-4-phosphate dehydrogenase (Photorhabdus laumondii subsp. laumondii (strain DSM 15139 / CIP 105565 / TT01) (Photorhabdus luminescens subsp. laumondii)).